The chain runs to 136 residues: Fatty acid-binding protein homolog 5 (136 aa).

Residues Arg-111 and 131 to 133 (RAY) each bind a fatty acid.

This sequence belongs to the calycin superfamily. Fatty-acid binding protein (FABP) family.

This Caenorhabditis elegans protein is Fatty acid-binding protein homolog 5 (lbp-5).